The primary structure comprises 354 residues: Tetraacyldisaccharide 4'-kinase (354 aa).

53-60 serves as a coordination point for ATP; it reads AWGGTGKT.

It belongs to the LpxK family.

It catalyses the reaction a lipid A disaccharide + ATP = a lipid IVA + ADP + H(+). It functions in the pathway glycolipid biosynthesis; lipid IV(A) biosynthesis; lipid IV(A) from (3R)-3-hydroxytetradecanoyl-[acyl-carrier-protein] and UDP-N-acetyl-alpha-D-glucosamine: step 6/6. In terms of biological role, transfers the gamma-phosphate of ATP to the 4'-position of a tetraacyldisaccharide 1-phosphate intermediate (termed DS-1-P) to form tetraacyldisaccharide 1,4'-bis-phosphate (lipid IVA). This chain is Tetraacyldisaccharide 4'-kinase, found in Nitratidesulfovibrio vulgaris (strain ATCC 29579 / DSM 644 / CCUG 34227 / NCIMB 8303 / VKM B-1760 / Hildenborough) (Desulfovibrio vulgaris).